Reading from the N-terminus, the 160-residue chain is Phosphopantetheine adenylyltransferase (160 aa).

Serine 9 serves as a coordination point for substrate. ATP is bound by residues 9–10 (SF) and histidine 17. Residues lysine 41, leucine 73, and lysine 87 each coordinate substrate. ATP-binding positions include 88–90 (GLR), glutamate 98, and 123–129 (YSYLSSS).

It belongs to the bacterial CoaD family. As to quaternary structure, homohexamer. Mg(2+) is required as a cofactor.

The protein localises to the cytoplasm. The enzyme catalyses (R)-4'-phosphopantetheine + ATP + H(+) = 3'-dephospho-CoA + diphosphate. It participates in cofactor biosynthesis; coenzyme A biosynthesis; CoA from (R)-pantothenate: step 4/5. In terms of biological role, reversibly transfers an adenylyl group from ATP to 4'-phosphopantetheine, yielding dephospho-CoA (dPCoA) and pyrophosphate. In Clostridium tetani (strain Massachusetts / E88), this protein is Phosphopantetheine adenylyltransferase.